The chain runs to 294 residues: Acetaldehyde dehydrogenase (294 aa).

11 to 14 serves as a coordination point for NAD(+); sequence SGNI. Cys-126 acts as the Acyl-thioester intermediate in catalysis. NAD(+) contacts are provided by residues 157–165 and Asn-269; that span reads SAGPGTRAN.

Belongs to the acetaldehyde dehydrogenase family.

The catalysed reaction is acetaldehyde + NAD(+) + CoA = acetyl-CoA + NADH + H(+). The polypeptide is Acetaldehyde dehydrogenase (pheF) (Geobacillus stearothermophilus (Bacillus stearothermophilus)).